Reading from the N-terminus, the 517-residue chain is Crotonobetaine/carnitine--CoA ligase (517 aa).

It belongs to the ATP-dependent AMP-binding enzyme family.

The catalysed reaction is 4-(trimethylamino)butanoate + ATP + CoA = 4-(trimethylamino)butanoyl-CoA + AMP + diphosphate. The enzyme catalyses crotonobetaine + ATP + CoA = crotonobetainyl-CoA + AMP + diphosphate. It carries out the reaction (R)-carnitine + ATP + CoA = (R)-carnitinyl-CoA + AMP + diphosphate. Its pathway is amine and polyamine metabolism; carnitine metabolism. Its function is as follows. Catalyzes the transfer of CoA to carnitine, generating the initial carnitinyl-CoA needed for the CaiB reaction cycle. Also has activity toward crotonobetaine and gamma-butyrobetaine. The protein is Crotonobetaine/carnitine--CoA ligase of Salmonella choleraesuis (strain SC-B67).